The sequence spans 186 residues: dTTP/UTP pyrophosphatase (186 aa).

The Proton acceptor role is filled by Asp-67.

This sequence belongs to the Maf family. YhdE subfamily. A divalent metal cation is required as a cofactor.

The protein resides in the cytoplasm. The enzyme catalyses dTTP + H2O = dTMP + diphosphate + H(+). It carries out the reaction UTP + H2O = UMP + diphosphate + H(+). In terms of biological role, nucleoside triphosphate pyrophosphatase that hydrolyzes dTTP and UTP. May have a dual role in cell division arrest and in preventing the incorporation of modified nucleotides into cellular nucleic acids. The protein is dTTP/UTP pyrophosphatase of Carboxydothermus hydrogenoformans (strain ATCC BAA-161 / DSM 6008 / Z-2901).